The sequence spans 475 residues: Protein arginine N-methyltransferase 2 (475 aa).

The tract at residues 167 to 194 (EFLSDDDDEEMDVDDDEEDESRDGEETG) is disordered. Acidic residues predominate over residues 169–194 (LSDDDDEEMDVDDDEEDESRDGEETG). The RMT2 domain maps to 247 to 475 (LAGSQMDYLK…EDFYLPVCTF (229 aa)). Residues tyrosine 254, methionine 285, 310 to 315 (FGLGII), 331 to 333 (EAH), 358 to 359 (WQ), and aspartate 378 contribute to the S-adenosyl-L-methionine site.

The protein belongs to the class I-like SAM-binding methyltransferase superfamily. RMT2 methyltransferase family. In terms of assembly, monomer.

It is found in the cytoplasm. The protein localises to the nucleus. S-adenosyl-L-methionine-dependent protein-arginine N-methyltransferase that methylates the delta-nitrogen atom of arginine residues to form N5-methylarginine (type IV) in target proteins. Monomethylates ribosomal protein L12. This chain is Protein arginine N-methyltransferase 2, found in Yarrowia lipolytica (strain CLIB 122 / E 150) (Yeast).